The chain runs to 372 residues: Rab9 effector protein with kelch motifs (372 aa).

Kelch repeat units follow at residues 49 to 95 (KVFI…FLPS), 100 to 146 (SIWV…TSSA), 151 to 203 (HLYV…AAGT), 204 to 250 (KLFI…AAVA), and 254 to 303 (HVYV…VIPW). Residues 321–342 (LQDEKGDAAEKPETRSGGSREE) form a disordered region. Residues 322 to 342 (QDEKGDAAEKPETRSGGSREE) are compositionally biased toward basic and acidic residues. One copy of the Kelch 6 repeat lies at 349–372 (LCFVFGGMNTEGEIYDDCLVTVVD).

As to quaternary structure, interacts with PIKFYVE; the interaction recruits RABEPK to the endosomal membrane. Interacts with RAB9 in its GTP-bound conformation. Post-translationally, phosphorylated on Ser residues by PIKFYVE.

It localises to the cytoplasm. The protein localises to the endosome membrane. Its function is as follows. Rab9 effector required for endosome to trans-Golgi network (TGN) transport. This Rattus norvegicus (Rat) protein is Rab9 effector protein with kelch motifs (Rabepk).